Consider the following 258-residue polypeptide: Imidazole glycerol phosphate synthase subunit HisF (258 aa).

Active-site residues include aspartate 11 and aspartate 130.

Belongs to the HisA/HisF family. Heterodimer of HisH and HisF.

It is found in the cytoplasm. It carries out the reaction 5-[(5-phospho-1-deoxy-D-ribulos-1-ylimino)methylamino]-1-(5-phospho-beta-D-ribosyl)imidazole-4-carboxamide + L-glutamine = D-erythro-1-(imidazol-4-yl)glycerol 3-phosphate + 5-amino-1-(5-phospho-beta-D-ribosyl)imidazole-4-carboxamide + L-glutamate + H(+). Its pathway is amino-acid biosynthesis; L-histidine biosynthesis; L-histidine from 5-phospho-alpha-D-ribose 1-diphosphate: step 5/9. IGPS catalyzes the conversion of PRFAR and glutamine to IGP, AICAR and glutamate. The HisF subunit catalyzes the cyclization activity that produces IGP and AICAR from PRFAR using the ammonia provided by the HisH subunit. The sequence is that of Imidazole glycerol phosphate synthase subunit HisF from Haemophilus influenzae (strain 86-028NP).